The primary structure comprises 456 residues: Phospholipase A1 member A (456 aa).

Residues 1 to 25 (MPPGPWESCFWVGGLILWLSVGSSG) form the signal peptide. Asn-79 carries an N-linked (GlcNAc...) asparagine glycan. The active-site Nucleophile is Ser-166. Asp-190 functions as the Charge relay system in the catalytic mechanism. Cys-245 and Cys-258 are joined by a disulfide. His-260 functions as the Charge relay system in the catalytic mechanism. Cystine bridges form between Cys-282/Cys-293 and Cys-296/Cys-304. N-linked (GlcNAc...) asparagine glycosylation is present at Asn-365. Residues 374–456 (IPKQQRYGKG…VSCDLKIACV (83 aa)) form an involved in the recognition of diacyl-phospholipids region.

Belongs to the AB hydrolase superfamily. Lipase family. As to expression, widely expressed. Expressed in placenta, prostate and liver. Weakly or not expressed in skin, leukocytes, platelets, colon, spleen, lung, muscle and kidney.

It is found in the secreted. The catalysed reaction is a 1,2-diacyl-sn-glycero-3-phospho-L-serine + H2O = a 2-acyl-sn-glycero-3-phospho-L-serine + a fatty acid + H(+). It carries out the reaction 1,2-di-(9Z)-octadecenoyl-sn-glycero-3-phospho-L-serine + H2O = 2-(9Z-octadecenoyl)-sn-glycero-3-phospho-L-serine + (9Z)-octadecenoate + H(+). It catalyses the reaction 1-hexadecanoyl-2-(5Z,8Z,11Z,14Z-eicosatetraenoyl)-sn-glycero-3-phospho-L-serine + H2O = 2-(5Z,8Z,11Z,14Z)-eicosatetraenoyl-sn-glycero-3-phospho-L-serine + hexadecanoate + H(+). The enzyme catalyses a 1-acyl-sn-glycero-3-phospho-L-serine + H2O = sn-glycero-3-phospho-L-serine + a fatty acid + H(+). The catalysed reaction is 1-(9Z-octadecenoyl)-sn-glycero-3-phospho-L-serine + H2O = sn-glycero-3-phospho-L-serine + (9Z)-octadecenoate + H(+). In terms of biological role, hydrolyzes the ester bond of the acyl group attached at the sn-1 position of phosphatidylserines (phospholipase A1 activity) and 1-acyl-2-lysophosphatidylserines (lysophospholipase activity) in the pathway of phosphatidylserines acyl chain remodeling. Cleaves phosphatidylserines exposed on the outer leaflet of the plasma membrane of apoptotic cells producing 2-acyl-1-lysophosphatidylserines, which in turn enhance mast cell activation and histamine production. Has no activity toward other glycerophospholipids including phosphatidylcholines, phosphatidylethanolamines, phosphatidic acids or phosphatidylinositols, or glycerolipids such as triolein. Functionally, hydrolyzes lyso-PS but not PS. This is Phospholipase A1 member A from Homo sapiens (Human).